The chain runs to 223 residues: ATP phosphoribosyltransferase (223 aa).

The protein belongs to the ATP phosphoribosyltransferase family. Short subfamily. In terms of assembly, heteromultimer composed of HisG and HisZ subunits.

It localises to the cytoplasm. The catalysed reaction is 1-(5-phospho-beta-D-ribosyl)-ATP + diphosphate = 5-phospho-alpha-D-ribose 1-diphosphate + ATP. The protein operates within amino-acid biosynthesis; L-histidine biosynthesis; L-histidine from 5-phospho-alpha-D-ribose 1-diphosphate: step 1/9. Its function is as follows. Catalyzes the condensation of ATP and 5-phosphoribose 1-diphosphate to form N'-(5'-phosphoribosyl)-ATP (PR-ATP). Has a crucial role in the pathway because the rate of histidine biosynthesis seems to be controlled primarily by regulation of HisG enzymatic activity. This Bordetella pertussis (strain Tohama I / ATCC BAA-589 / NCTC 13251) protein is ATP phosphoribosyltransferase.